The following is a 1133-amino-acid chain: RNA-dependent RNA polymerase 2 (1133 aa).

Positions 830, 832, and 834 each coordinate Mg(2+).

The protein belongs to the RdRP family. Interacts with NRPD1 and SHH1. Associates with Pol IV complex, forming an interpolymerase channel bridging their active sites, through which the Pol IV-generated transcript is handed over to the RDR2 active site after being backtracked, where it is used as the template for double-stranded RNA (dsRNA) synthesis. Interacts with JMJ24.

It is found in the nucleus. Its subcellular location is the nucleoplasm. The protein localises to the nucleolus. It catalyses the reaction RNA(n) + a ribonucleoside 5'-triphosphate = RNA(n+1) + diphosphate. In terms of biological role, RNA-dependent direct polymerase involved in the production of small interfering RNAs (siRNAs). Binds to single-stranded RNA (ssRNA); engages ssRNAs longer than 7 nucleotides and initiates internal to their 3' ends. Able to transcribe the RNA of an RNA/DNA hybrid, the transcript produced by Pol IV, if its 3' end is accessible, to generate double-stranded small interfering RNAs (dsRNAs) precursor essential for establishing and maintaining DNA methylation. Required for the biogenesis of endogenous siRNAs of 24 nucleotide which derive from heterochromatin and DNA repeats such as transposons or endogenous gene tandem repeats, such as repeats present in FWA gene. Involved in transcriptional gene silencing (TGS). Component of the RNA-directed DNA methylation (RdDM) silencing pathway that utilizes siRNAs to guide DNA methyltransferases to asymmetric cytosines. Involved in control of flowering time through RdDM of FWA locus. Required for reception of long-distance mRNA silencing in the shoot. Required for the formation of telomeric siRNAs and the RNA-dependent DNA methylation of asymmetric cytosines in telomeric (5'-CCCTAAA-3') repeats. The chain is RNA-dependent RNA polymerase 2 from Arabidopsis thaliana (Mouse-ear cress).